Here is a 1193-residue protein sequence, read N- to C-terminus: Cysteine protease ATG4 (1193 aa).

Disordered stretches follow at residues 23–284 and 358–474; these read AAIA…NKMS and WRPI…KKKS. A compositionally biased stretch (pro residues) spans 35–49; it reads NLPPPPPPDRIPPPK. Residues 50–59 are compositionally biased toward basic residues; the sequence is GRSHQQKFKI. Composition is skewed to basic and acidic residues over residues 60-72, 117-127, and 140-153; these read LRKEKDKDRRQPI, ANREEKKEKTS, and FGRDKDKDRGKPEE. Over residues 170–185 the composition is skewed to low complexity; the sequence is SSSTSTDSTTSRSITS. Over residues 186–205 the composition is skewed to polar residues; it reads AFTRQNSIQSRRSPRTSFGQ. Positions 227–238 are enriched in low complexity; sequence SSTTSHDPSSDP. Polar residues-rich tracts occupy residues 253–262, 270–284, and 389–447; these read QGASMSSLSR, GGTSRSPDTFPNKMS, and LSMN…STLS. Cysteine 570 acts as the Nucleophile in catalysis. Catalysis depends on residues aspartate 789 and histidine 791. Disordered regions lie at residues 807–869, 899–924, and 1000–1171; these read HSAK…SKYK, VPKSSFESNGAAQEQPKKQKGFTSTA, and QDEM…PARN. Residues 835–846 show a composition bias toward low complexity; it reads RTPETPRSTTPS. 2 stretches are compositionally biased toward acidic residues: residues 1004 to 1029 and 1070 to 1084; these read PSWEEDDDAGLESVSEPDFEGDEFEE and HLDVEEANSTDDDNE. Composition is skewed to basic and acidic residues over residues 1097 to 1112 and 1152 to 1164; these read IARHLNRVDLSSKREQ and PRYEQNGETEQER.

It belongs to the peptidase C54 family.

The protein resides in the cytoplasm. Its subcellular location is the nucleus. It is found in the preautophagosomal structure. The enzyme catalyses [protein]-C-terminal L-amino acid-glycyl-phosphatidylethanolamide + H2O = [protein]-C-terminal L-amino acid-glycine + a 1,2-diacyl-sn-glycero-3-phosphoethanolamine. In terms of biological role, cysteine protease that plays a key role in cytoplasm to vacuole transport (Cvt) and autophagy by mediating both proteolytic activation and delipidation of ATG8. Required for selective autophagic degradation of the nucleus (nucleophagy) as well as for mitophagy which contributes to regulate mitochondrial quantity and quality by eliminating the mitochondria to a basal level to fulfill cellular energy requirements and preventing excess ROS production. The protease activity is required for proteolytic activation of ATG8: cleaves the C-terminal amino acid of ATG8 to reveal a C-terminal glycine. ATG8 ubiquitin-like activity requires the exposure of the glycine at the C-terminus for its conjugation to phosphatidylethanolamine (PE) and its insertion to membranes, which is necessary for autophagy. The ATG8-PE conjugate mediates tethering between adjacent membranes and stimulates membrane hemifusion, leading to expansion of the autophagosomal membrane during autophagy. In addition to the protease activity, also catalyzes deconjugation of PE-conjugated forms of ATG8 during macroautophagy: ATG8 delipidation is required to release the protein from membranes, which facilitates multiple events during macroautophagy, and especially for efficient autophagosome biogenesis, the assembly of ATG9-containing tubulovesicular clusters into phagophores/autophagosomes, and for the disassembly of PAS-associated ATG components. ATG8 delipidation by ATG4 also recycles ATG8-PE generated on inappropriate membranes to maintain a reservoir of unlipidated ATG8 that is required for autophagosome formation at the PAS. This Cryptococcus neoformans var. neoformans serotype D (strain JEC21 / ATCC MYA-565) (Filobasidiella neoformans) protein is Cysteine protease ATG4 (ATG4).